A 114-amino-acid polypeptide reads, in one-letter code: Large ribosomal subunit protein uL22 (114 aa).

It belongs to the universal ribosomal protein uL22 family. Part of the 50S ribosomal subunit.

This protein binds specifically to 23S rRNA; its binding is stimulated by other ribosomal proteins, e.g. L4, L17, and L20. It is important during the early stages of 50S assembly. It makes multiple contacts with different domains of the 23S rRNA in the assembled 50S subunit and ribosome. In terms of biological role, the globular domain of the protein is located near the polypeptide exit tunnel on the outside of the subunit, while an extended beta-hairpin is found that lines the wall of the exit tunnel in the center of the 70S ribosome. This Desulfitobacterium hafniense (strain DSM 10664 / DCB-2) protein is Large ribosomal subunit protein uL22.